A 445-amino-acid chain; its full sequence is MAAQASEDLQKLDLNGQGGAAKADAPTAGQAEAGEAEDDSDDDADEGNAAPEGGANGAAKKKKKRKSKKKKKGGAKVQSEPPRVPLSQLFAGKQYPEGEIVEYKDDNLYRTTNEEKRYLDRMNNDFLQEYRQGAEVHRQVRQYAQKTIKPGQTLTEIAEGIEESVRALTGHQGLEEGDNLKGGMGFPCGLSINHCAAHYTPNAGNKMVLQQGDVMKVDFGAHINGRIVDSAFTVAFDPVYDPLLEAVKDATNTGIREAGIDVRMSDIGAAIQEAMESYEVELNGTMHPVKCIRNLNGHNIDQHVIHGGKSVPIVKGGDQTKMEEGEVFAIETFGSTGKGYVREDMETSHYALVPNASPVPLRLSSAKNLLNVINKNFGTLPFCRRYLDRLGQDKYLLGLNNLVSSGIVQDYPPLCDIKGSYTAQYEHTIVLRPNVKEVISRGDDY.

Residues M1–L86 are disordered. The span at G34–E46 shows a compositional bias: acidic residues. The span at A59 to G74 shows a compositional bias: basic residues. H198 is a binding site for substrate. The a divalent metal cation site is built by D218, D229, and H298. H306 lines the substrate pocket. A divalent metal cation-binding residues include E331 and E426.

This sequence belongs to the peptidase M24A family. Methionine aminopeptidase eukaryotic type 2 subfamily. The cofactor is Co(2+). It depends on Zn(2+) as a cofactor. Requires Mn(2+) as cofactor. Fe(2+) serves as cofactor.

It localises to the cytoplasm. It carries out the reaction Release of N-terminal amino acids, preferentially methionine, from peptides and arylamides.. Functionally, cotranslationally removes the N-terminal methionine from nascent proteins. The N-terminal methionine is often cleaved when the second residue in the primary sequence is small and uncharged (Met-Ala-, Cys, Gly, Pro, Ser, Thr, or Val). The chain is Methionine aminopeptidase 2-1 from Aspergillus flavus (strain ATCC 200026 / FGSC A1120 / IAM 13836 / NRRL 3357 / JCM 12722 / SRRC 167).